A 464-amino-acid chain; its full sequence is Glutamate--tRNA ligase (464 aa).

The short motif at 8–18 is the 'HIGH' region element; the sequence is PSPTGYMHLGN. Positions 96, 98, 123, and 125 each coordinate Zn(2+). Positions 240-244 match the 'KMSKS' region motif; sequence KLSKR. ATP is bound at residue Lys-243.

This sequence belongs to the class-I aminoacyl-tRNA synthetase family. Glutamate--tRNA ligase type 1 subfamily. In terms of assembly, monomer. Requires Zn(2+) as cofactor.

It localises to the cytoplasm. The catalysed reaction is tRNA(Glu) + L-glutamate + ATP = L-glutamyl-tRNA(Glu) + AMP + diphosphate. Functionally, catalyzes the attachment of glutamate to tRNA(Glu) in a two-step reaction: glutamate is first activated by ATP to form Glu-AMP and then transferred to the acceptor end of tRNA(Glu). This chain is Glutamate--tRNA ligase, found in Hydrogenobaculum sp. (strain Y04AAS1).